The chain runs to 507 residues: Histidine ammonia-lyase (507 aa).

The segment at residues Ala141–Gly143 is a cross-link (5-imidazolinone (Ala-Gly)). The residue at position 142 (Ser142) is a 2,3-didehydroalanine (Ser).

This sequence belongs to the PAL/histidase family. In terms of processing, contains an active site 4-methylidene-imidazol-5-one (MIO), which is formed autocatalytically by cyclization and dehydration of residues Ala-Ser-Gly.

The protein localises to the cytoplasm. The enzyme catalyses L-histidine = trans-urocanate + NH4(+). Its pathway is amino-acid degradation; L-histidine degradation into L-glutamate; N-formimidoyl-L-glutamate from L-histidine: step 1/3. This is Histidine ammonia-lyase from Burkholderia ambifaria (strain ATCC BAA-244 / DSM 16087 / CCUG 44356 / LMG 19182 / AMMD) (Burkholderia cepacia (strain AMMD)).